The sequence spans 429 residues: 3-phosphoshikimate 1-carboxyvinyltransferase (429 aa).

The 3-phosphoshikimate site is built by Lys-22, Ser-23, and Arg-27. Residue Lys-22 participates in phosphoenolpyruvate binding. Phosphoenolpyruvate contacts are provided by Gly-94 and Arg-122. 3-phosphoshikimate is bound by residues Ser-167, Gln-169, Asp-315, and Lys-342. Residue Gln-169 participates in phosphoenolpyruvate binding. The Proton acceptor role is filled by Asp-315. The phosphoenolpyruvate site is built by Arg-346 and Arg-388.

This sequence belongs to the EPSP synthase family. In terms of assembly, monomer.

It is found in the cytoplasm. It carries out the reaction 3-phosphoshikimate + phosphoenolpyruvate = 5-O-(1-carboxyvinyl)-3-phosphoshikimate + phosphate. It participates in metabolic intermediate biosynthesis; chorismate biosynthesis; chorismate from D-erythrose 4-phosphate and phosphoenolpyruvate: step 6/7. Catalyzes the transfer of the enolpyruvyl moiety of phosphoenolpyruvate (PEP) to the 5-hydroxyl of shikimate-3-phosphate (S3P) to produce enolpyruvyl shikimate-3-phosphate and inorganic phosphate. In Geobacter sulfurreducens (strain ATCC 51573 / DSM 12127 / PCA), this protein is 3-phosphoshikimate 1-carboxyvinyltransferase.